A 338-amino-acid polypeptide reads, in one-letter code: MKVFYDKDCDLSLIKGKTVAIIGYGSQGHAHAQNLNDSGVKVVVGLRKGGASWDKVGKAGLTVLEVNEAVKSADVVMILLPDEQIAEVYKNNVEPNIKQGASLAFAHGFNVHYNQVVPRADLDVWMVAPKAPGHTVRSTYSQGGGVPHLVAVHQDKSGKARDLALSYAMANGGGKAGIIETNFKEETETDLFGEQAVLCGGAVELIKMGFETLVEAGYAPEMAYFECLHELKLIVDLIYEGGIANMNYSISNNAEFGEYVTGPEVINEQSRAAMRNALKRIQNGDYAKMFIQEGRLNYPSMTARRRNTADHKIEVVGAQLRAMMPWIAKNKLVDQSRN.

A KARI N-terminal Rossmann domain is found at 1-181; sequence MKVFYDKDCD…GGGKAGIIET (181 aa). NADP(+) is bound by residues 24–27, Arg-47, and Ser-52; that span reads YGSQ. His-107 is a catalytic residue. An NADP(+)-binding site is contributed by Gly-133. Positions 182 to 327 constitute a KARI C-terminal knotted domain; the sequence is NFKEETETDL…AQLRAMMPWI (146 aa). Positions 190, 194, 226, and 230 each coordinate Mg(2+). Residue Ser-251 coordinates substrate.

Belongs to the ketol-acid reductoisomerase family. It depends on Mg(2+) as a cofactor.

The enzyme catalyses (2R)-2,3-dihydroxy-3-methylbutanoate + NADP(+) = (2S)-2-acetolactate + NADPH + H(+). It catalyses the reaction (2R,3R)-2,3-dihydroxy-3-methylpentanoate + NADP(+) = (S)-2-ethyl-2-hydroxy-3-oxobutanoate + NADPH + H(+). It participates in amino-acid biosynthesis; L-isoleucine biosynthesis; L-isoleucine from 2-oxobutanoate: step 2/4. The protein operates within amino-acid biosynthesis; L-valine biosynthesis; L-valine from pyruvate: step 2/4. Its function is as follows. Involved in the biosynthesis of branched-chain amino acids (BCAA). Catalyzes an alkyl-migration followed by a ketol-acid reduction of (S)-2-acetolactate (S2AL) to yield (R)-2,3-dihydroxy-isovalerate. In the isomerase reaction, S2AL is rearranged via a Mg-dependent methyl migration to produce 3-hydroxy-3-methyl-2-ketobutyrate (HMKB). In the reductase reaction, this 2-ketoacid undergoes a metal-dependent reduction by NADPH to yield (R)-2,3-dihydroxy-isovalerate. The chain is Ketol-acid reductoisomerase (NADP(+)) from Paracidovorax citrulli (strain AAC00-1) (Acidovorax citrulli).